Consider the following 213-residue polypeptide: Protein GrpE (213 aa).

A disordered region spans residues 1–61 (MEQGEKQVME…AEKAPTAEEL (61 aa)). The segment covering 13–35 (TYDEPEREQPIEEEAAPQPEEES) has biased composition (acidic residues).

It belongs to the GrpE family. In terms of assembly, homodimer.

The protein resides in the cytoplasm. In terms of biological role, participates actively in the response to hyperosmotic and heat shock by preventing the aggregation of stress-denatured proteins, in association with DnaK and GrpE. It is the nucleotide exchange factor for DnaK and may function as a thermosensor. Unfolded proteins bind initially to DnaJ; upon interaction with the DnaJ-bound protein, DnaK hydrolyzes its bound ATP, resulting in the formation of a stable complex. GrpE releases ADP from DnaK; ATP binding to DnaK triggers the release of the substrate protein, thus completing the reaction cycle. Several rounds of ATP-dependent interactions between DnaJ, DnaK and GrpE are required for fully efficient folding. In Geobacillus kaustophilus (strain HTA426), this protein is Protein GrpE.